We begin with the raw amino-acid sequence, 325 residues long: Tartrate-resistant acid phosphatase type 5 (325 aa).

The N-terminal stretch at 1 to 21 (MDTWTLLLVLHTSLLLPWAEG) is a signal peptide. N-linked (GlcNAc...) asparagine glycosylation is found at asparagine 116 and asparagine 147.

Exists either as monomer or, after proteolytic processing, as a dimer of two chains linked by disulfide bond(s). The cofactor is Fe cation.

Its subcellular location is the lysosome. It catalyses the reaction a phosphate monoester + H2O = an alcohol + phosphate. This chain is Tartrate-resistant acid phosphatase type 5 (ACP5), found in Oryctolagus cuniculus (Rabbit).